The primary structure comprises 92 residues: Small ribosomal subunit protein uS19 (92 aa).

Positions 73-92 (EFSPSRTYYGHAADKKAKRR) are disordered.

The protein belongs to the universal ribosomal protein uS19 family.

Functionally, protein S19 forms a complex with S13 that binds strongly to the 16S ribosomal RNA. The polypeptide is Small ribosomal subunit protein uS19 (Maricaulis maris (strain MCS10) (Caulobacter maris)).